We begin with the raw amino-acid sequence, 927 residues long: Protein unc-45 homolog B (927 aa).

TPR repeat units lie at residues 4-37 (PVQLKEEGNKYFQSNEYGQAIQCYSKALKLITDK), 41-74 (AVLYRNRSACYLKQDNYVQAAADASKAIDVDASD), and 76-108 (KALFRRCQALEKLGKLDQAYKDVQRCATLEPKN). ARM repeat units lie at residues 167 to 206 (DAGAEQIFQNNGVNLLMQLIESKDPEMILSAIRTLSGMCT), 209 to 248 (RARATAIVHLVGINKICSIMAVDNEEIALAACNLLQNIVD), and 746 to 785 (DKLRQKIIKEKALPEIENYMFENHEQIRQAATECMCNLAL).

As to expression, detected initially throughout the somites and the heart and gradually also expressed in the jaw, branchial arches and body wall muscles at later embryonic stages.

It is found in the cytoplasm. The protein resides in the myofibril. Its subcellular location is the sarcomere. It localises to the z line. The protein localises to the a band. It is found in the perinuclear region. The protein resides in the cytosol. Functionally, acts as a co-chaperone for HSP90 and is required for proper folding of the myosin motor domain. Plays a role in sarcomere formation during muscle cell development. Is necessary for normal early lens development. This Xenopus tropicalis (Western clawed frog) protein is Protein unc-45 homolog B.